Consider the following 391-residue polypeptide: Coiled-coil domain-containing protein 85C (391 aa).

Coiled coils occupy residues 19 to 86 (EELL…RELC) and 116 to 146 (KEVG…KEII). Disordered regions lie at residues 155-238 (GAGS…LNDS) and 278-303 (PYHS…TRVT). A compositionally biased stretch (polar residues) spans 157–175 (GSRSSIDSQNSLTNLNGSS). The span at 182 to 194 (DGSSTSSTGSAGS) shows a compositional bias: low complexity. Positions 280-303 (HSESQLSPLPQYQEPLQNGSTRVT) are enriched in polar residues.

The protein belongs to the CCDC85 family.

Its subcellular location is the cell junction. The protein localises to the tight junction. The protein resides in the adherens junction. Functionally, may play a role in cell-cell adhesion and epithelium development through its interaction with proteins of the beta-catenin family. May play an important role in cortical development, especially in the maintenance of radial glia. The polypeptide is Coiled-coil domain-containing protein 85C (ccdc85c) (Xenopus tropicalis (Western clawed frog)).